The chain runs to 150 residues: D-aminoacyl-tRNA deacylase (150 aa).

The Gly-cisPro motif, important for rejection of L-amino acids signature appears at 133–134 (GP).

Belongs to the DTD family. Homodimer.

Its subcellular location is the cytoplasm. The catalysed reaction is glycyl-tRNA(Ala) + H2O = tRNA(Ala) + glycine + H(+). The enzyme catalyses a D-aminoacyl-tRNA + H2O = a tRNA + a D-alpha-amino acid + H(+). An aminoacyl-tRNA editing enzyme that deacylates mischarged D-aminoacyl-tRNAs. Also deacylates mischarged glycyl-tRNA(Ala), protecting cells against glycine mischarging by AlaRS. Acts via tRNA-based rather than protein-based catalysis; rejects L-amino acids rather than detecting D-amino acids in the active site. By recycling D-aminoacyl-tRNA to D-amino acids and free tRNA molecules, this enzyme counteracts the toxicity associated with the formation of D-aminoacyl-tRNA entities in vivo and helps enforce protein L-homochirality. In Kocuria rhizophila (strain ATCC 9341 / DSM 348 / NBRC 103217 / DC2201), this protein is D-aminoacyl-tRNA deacylase.